We begin with the raw amino-acid sequence, 740 residues long: Protein SIEVE ELEMENT OCCLUSION B (740 aa).

The segment covering 1-23 (MESLIKSQHAQQLAGHKNTTGKT) has biased composition (polar residues). Residues 1–27 (MESLIKSQHAQQLAGHKNTTGKTPSME) form a disordered region.

As to quaternary structure, can form homodimer. In terms of tissue distribution, expressed in phloem sieve elements.

Its function is as follows. Scaffold protein required to form the phloem filament matrix in sieve elements. The protein is Protein SIEVE ELEMENT OCCLUSION B of Arabidopsis thaliana (Mouse-ear cress).